A 190-amino-acid chain; its full sequence is dTTP/UTP pyrophosphatase (190 aa).

The active-site Proton acceptor is Asp-69.

Belongs to the Maf family. YhdE subfamily. A divalent metal cation is required as a cofactor.

It localises to the cytoplasm. It catalyses the reaction dTTP + H2O = dTMP + diphosphate + H(+). The catalysed reaction is UTP + H2O = UMP + diphosphate + H(+). Functionally, nucleoside triphosphate pyrophosphatase that hydrolyzes dTTP and UTP. May have a dual role in cell division arrest and in preventing the incorporation of modified nucleotides into cellular nucleic acids. This chain is dTTP/UTP pyrophosphatase, found in Sphingopyxis alaskensis (strain DSM 13593 / LMG 18877 / RB2256) (Sphingomonas alaskensis).